A 230-amino-acid polypeptide reads, in one-letter code: Uracil phosphoribosyltransferase (230 aa).

38–42 is a GTP binding site; the sequence is KGLVK. 5-phospho-alpha-D-ribose 1-diphosphate contacts are provided by residues Arg-87, Arg-112, and 140–148; that span reads DPMIATGST. Uracil is bound by residues Ile-204 and 209 to 211; that span reads GDA. Asp-210 contacts 5-phospho-alpha-D-ribose 1-diphosphate.

Belongs to the UPRTase family. It depends on Mg(2+) as a cofactor.

The catalysed reaction is UMP + diphosphate = 5-phospho-alpha-D-ribose 1-diphosphate + uracil. Its pathway is pyrimidine metabolism; UMP biosynthesis via salvage pathway; UMP from uracil: step 1/1. With respect to regulation, allosterically activated by GTP. In terms of biological role, catalyzes the conversion of uracil and 5-phospho-alpha-D-ribose 1-diphosphate (PRPP) to UMP and diphosphate. The polypeptide is Uracil phosphoribosyltransferase (Thermococcus kodakarensis (strain ATCC BAA-918 / JCM 12380 / KOD1) (Pyrococcus kodakaraensis (strain KOD1))).